A 249-amino-acid polypeptide reads, in one-letter code: Probable septum site-determining protein MinC (249 aa).

The interval 115–144 (PTAVSPPPPPPPPPARAEPAPPAARPAPGR) is disordered. The segment covering 118-139 (VSPPPPPPPPPARAEPAPPAAR) has biased composition (pro residues).

It belongs to the MinC family. Interacts with MinD and FtsZ.

Cell division inhibitor that blocks the formation of polar Z ring septums. Rapidly oscillates between the poles of the cell to destabilize FtsZ filaments that have formed before they mature into polar Z rings. Prevents FtsZ polymerization. The sequence is that of Probable septum site-determining protein MinC from Xanthomonas axonopodis pv. citri (strain 306).